The following is a 733-amino-acid chain: Fibronectin type III domain-containing protein 7 (733 aa).

Residues 1–25 (MAGGRETCLPLIGFILICLKMVASA) form the signal peptide. 8 Fibronectin type-III domains span residues 28 to 115 (APEI…TVLA), 116 to 202 (APIL…TSPR), 203 to 288 (APAN…TVAC), 289 to 373 (APGR…TAPC), 374 to 459 (CPSD…TAPC), 460 to 544 (SPEI…TVPC), 545 to 632 (CPTG…CCPL), and 631 to 715 (PLGV…YSVT). Residue N230 is glycosylated (N-linked (GlcNAc...) asparagine). A glycan (N-linked (GlcNAc...) asparagine) is linked at N433.

Its subcellular location is the secreted. The polypeptide is Fibronectin type III domain-containing protein 7 (FNDC7) (Homo sapiens (Human)).